Reading from the N-terminus, the 227-residue chain is Cytidylate kinase (227 aa).

An ATP-binding site is contributed by 12–20 (GPSGAGKGT).

This sequence belongs to the cytidylate kinase family. Type 1 subfamily.

It is found in the cytoplasm. It carries out the reaction CMP + ATP = CDP + ADP. The catalysed reaction is dCMP + ATP = dCDP + ADP. This Salmonella typhimurium (strain LT2 / SGSC1412 / ATCC 700720) protein is Cytidylate kinase.